A 149-amino-acid chain; its full sequence is Transcriptional regulator MraZ (149 aa).

2 consecutive SpoVT-AbrB domains span residues 6–52 (HAHR…TPPD) and 81–124 (SEEV…DKRE).

This sequence belongs to the MraZ family. In terms of assembly, forms oligomers.

Its subcellular location is the cytoplasm. It localises to the nucleoid. The sequence is that of Transcriptional regulator MraZ from Maridesulfovibrio salexigens (strain ATCC 14822 / DSM 2638 / NCIMB 8403 / VKM B-1763) (Desulfovibrio salexigens).